The primary structure comprises 479 residues: Ribosomal RNA small subunit methyltransferase F (479 aa).

Residues 125-131 (AAAPGSK), glutamate 149, aspartate 176, and aspartate 194 contribute to the S-adenosyl-L-methionine site. Residue cysteine 247 is the Nucleophile of the active site.

Belongs to the class I-like SAM-binding methyltransferase superfamily. RsmB/NOP family.

It localises to the cytoplasm. It catalyses the reaction cytidine(1407) in 16S rRNA + S-adenosyl-L-methionine = 5-methylcytidine(1407) in 16S rRNA + S-adenosyl-L-homocysteine + H(+). Its function is as follows. Specifically methylates the cytosine at position 1407 (m5C1407) of 16S rRNA. The chain is Ribosomal RNA small subunit methyltransferase F from Escherichia coli O81 (strain ED1a).